The sequence spans 64 residues: UPF0337 protein SH2043 (64 aa).

Residues 1 to 64 (MAEDKFEQAK…DKVKGNNDNK (64 aa)) form a disordered region. Residues 22-64 (DNKDLEKEGQNDKASGKAKEAVENVKNKANDLIDKVKGNNDNK) show a composition bias toward basic and acidic residues.

This sequence belongs to the UPF0337 (CsbD) family.

The chain is UPF0337 protein SH2043 from Staphylococcus haemolyticus (strain JCSC1435).